The following is a 162-amino-acid chain: ATP synthase subunit delta, mitochondrial (162 aa).

A mitochondrion-targeting transit peptide spans 1 to 25 (MSSLRLLASAARRATTHVAYTRRGY).

This sequence belongs to the ATPase epsilon chain family. In terms of assembly, F-type ATPases have 2 components, CF(1) - the catalytic core - and CF(0) - the membrane proton channel. CF(1) has five subunits: alpha(3), beta(3), gamma(1), delta(1), epsilon(1). CF(0) has three main subunits: a, b and c.

The protein localises to the mitochondrion. It is found in the mitochondrion inner membrane. Mitochondrial membrane ATP synthase (F(1)F(0) ATP synthase or Complex V) produces ATP from ADP in the presence of a proton gradient across the membrane which is generated by electron transport complexes of the respiratory chain. F-type ATPases consist of two structural domains, F(1) - containing the extramembraneous catalytic core, and F(0) - containing the membrane proton channel, linked together by a central stalk and a peripheral stalk. During catalysis, ATP turnover in the catalytic domain of F(1) is coupled via a rotary mechanism of the central stalk subunits to proton translocation. Part of the complex F(1) domain and of the central stalk which is part of the complex rotary element. Rotation of the central stalk against the surrounding alpha(3)beta(3) subunits leads to hydrolysis of ATP in three separate catalytic sites on the beta subunits. The chain is ATP synthase subunit delta, mitochondrial (atpD) from Agaricus bisporus (White button mushroom).